The sequence spans 1109 residues: Hybrid signal transduction histidine kinase F (1109 aa).

In terms of domain architecture, PAC spans 237-289 (LSTETTITKKNGEKYPAEVFVKEISDIHSNSIGIMIIVRDITDQIRLKEMNIE). Positions 324-547 (TISHEIRTPL…LFSVTLNFEQ (224 aa)) constitute a Histidine kinase domain. His-327 is modified (phosphohistidine; by autocatalysis). Positions 719 to 760 (SNLIQTISQIDNQQQQQQQQLQQQEQEQQHQQQQLQQEQQFV) form a coiled coil. The segment covering 739-758 (LQQQEQEQQHQQQQLQQEQQ) has biased composition (low complexity). Residues 739–819 (LQQQEQEQQH…TSSDSGESDE (81 aa)) are disordered. The segment covering 767–782 (DSSEKKTTPKKDRGKY) has biased composition (basic and acidic residues). A Response regulatory domain is found at 928–1048 (RILLVDDNAV…PLGELVKKYL (121 aa)). At Asp-977 the chain carries 4-aspartylphosphate. Low complexity predominate over residues 1052–1099 (NNNNNNNNNNNNNNNNNSNNNNSNSNSNPNSNSNSNSNSNSNPNQNPN). The tract at residues 1052 to 1109 (NNNNNNNNNNNNNNNNNSNNNNSNSNSNPNSNSNSNSNSNSNPNQNPNYCNNLPTDFI) is disordered. Residues 1100–1109 (YCNNLPTDFI) are compositionally biased toward polar residues.

It catalyses the reaction ATP + protein L-histidine = ADP + protein N-phospho-L-histidine.. Its function is as follows. Acts as a receptor histidine kinase for a signal transduction pathway. This protein undergoes an ATP-dependent autophosphorylation at a conserved histidine residue in the kinase core, and a phosphoryl group is then transferred to a conserved aspartate residue in the receiver domain. This Dictyostelium discoideum (Social amoeba) protein is Hybrid signal transduction histidine kinase F (dhkF).